The sequence spans 531 residues: MKPVKPPRINGRVPVLSAQEAVNYIPDEATLCVLGAGGGILEATTLITALADKYKQTQTPRNLSIISPTGLGDRADRGISPLAQEGLVKWALCGHWGQSPRISELAEQNKIIAYNYPQGVLTQTLRAAAAHQPGIISDIGIGTFVDPRQQGGKLNEVTKEDLIKLVEFDNKEYLYYKAIAPDIAFIRATTCDSEGYATFEDEVMYLDALVIAQAVHNNGGIVMMQVQKMVKKATLHPKSVRIPGYLVDIVVVDPDQTQLYGGAPVNRFISGDFTLDDSTKLSLPLNQRKLVARRALFEMRKGAVGNVGVGIADGIGLVAREEGCADDFILTVETGPIGGITSQGIAFGANVNTRAILDMTSQFDFYHGGGLDVCYLSFAEVDQHGNVGVHKFNGKIMGTGGFIDISATSKKIIFCGTLTAGSLKTEITDGKLNIVQEGRVKKFIRELPEITFSGKIALERGLDVRYITERAVFTLKEDGLHLIEIAPGVDLQKDILDKMDFTPVISPELKLMDERLFIDAAMGFVLPEAAH.

E333 serves as the catalytic 5-glutamyl coenzyme A thioester intermediate.

Belongs to the 3-oxoacid CoA-transferase family. As to quaternary structure, homotetramer; dimer of dimers.

The catalysed reaction is an acyl-CoA + acetate = a carboxylate + acetyl-CoA. Functionally, coA transferase having broad substrate specificity for short-chain acyl-CoA thioesters with the activity decreasing when the length of the carboxylic acid chain exceeds four carbons. May play a role in short-chain fatty acid metabolism in E.coli. The polypeptide is Acetate CoA-transferase YdiF (ydiF) (Escherichia coli (strain K12)).